Reading from the N-terminus, the 417-residue chain is Voltage-gated ClC-type chloride channel ClcB (417 aa).

The next 10 membrane-spanning stretches (helical) occupy residues 5 to 25 (LLIA…FRHA), 54 to 74 (LITP…WQKM), 146 to 166 (LWIA…PLAG), 168 to 188 (LFIA…PVVV), 222 to 242 (VMIV…MWLM), 258 to 278 (WQLA…PTVW), 288 to 308 (FLLS…KILA), 316 to 336 (GAPG…GMFL), 349 to 371 (EIAI…HAPI), and 380 to 400 (MTGE…ASVL).

It belongs to the chloride channel (TC 2.A.49) family. ClcB subfamily.

The protein localises to the cell inner membrane. Functionally, probably acts as an electrical shunt for an outwardly-directed proton pump that is linked to amino acid decarboxylation, as part of the extreme acid resistance (XAR) response. The polypeptide is Voltage-gated ClC-type chloride channel ClcB (Salmonella dublin (strain CT_02021853)).